Reading from the N-terminus, the 122-residue chain is MSDWSGSVPANAENGKSTGLILKQGDTISVVAHGWVKYGRDNVEWAAPDGPVPNNPQPSSIATLVAKIANKKFAIGNGVLHKTVPVDGELILLFNDVPGTFGDNSGEFQVEVIIESRYSPLK.

Y38 is a Ca(2+) binding site. 3 residues coordinate an alpha-D-galactoside: E44, Q57, and D96. 4 residues coordinate Ca(2+): D96, T100, D103, and N104. D103 contributes to the an alpha-D-galactoside binding site.

This sequence belongs to the LecA/PllA lectin family. In terms of assembly, homotetramer.

Functionally, lectin that specifically binds alpha-galactoside-terminating glycoconjugates. Shows high apparent binding to the alpha-Gal epitope (Gal-alpha-1,3-Gal-beta-1,4-GlcNAc terminating glycans) as well as to Gal-alpha-1,4-GlcNAc and Gal-alpha-1,3-GalNAc. Gal-alpha-1,3-GalNAc may be one natural ligand bound by PllA both in the nematode symbiont and in infected insects. The sequence is that of Lectin A from Photorhabdus laumondii subsp. laumondii (strain DSM 15139 / CIP 105565 / TT01) (Photorhabdus luminescens subsp. laumondii).